The primary structure comprises 274 residues: MAIHLYKTSTPSTRNGAVDSKVKSNPRNNLIYGQHHCGKGRNARGIITAGHRGGGHKRLYRKIDFRRNEKDIYGRIVTIEYDPNRNAYICLIHYRDGEKRYILHPRGAIIGDTIVSGTEVPIKMGNALPLTDMPLGTAIHNIEITLGKGGQLARAAGAVAKLIAKEGKSATLKLPSGEVRLISKNCSATVGQVGNVGVNQKSLGRAGSKRWLGKRPVVRGVVMNPVDHPHGGGEGRAPIGRKQPTTPWGYPALGKRSRKRNKYSDNLILRRRSK.

Disordered regions lie at residues 1–23 (MAIHLYKTSTPSTRNGAVDSKVK) and 224–274 (NPVD…RRSK).

It belongs to the universal ribosomal protein uL2 family. Part of the 50S ribosomal subunit.

It localises to the plastid. The protein resides in the chloroplast. In Lactuca sativa (Garden lettuce), this protein is Large ribosomal subunit protein uL2cz/uL2cy (rpl2-A).